Consider the following 328-residue polypeptide: Ketol-acid reductoisomerase (NADP(+)) (328 aa).

Residues 2 to 182 (AKIYRDGDAS…GATRAGVIET (181 aa)) enclose the KARI N-terminal Rossmann domain. NADP(+) contacts are provided by residues 25–28 (YGIQ), Arg48, Ser53, and 83–86 (DMEQ). His108 is a catalytic residue. NADP(+) is bound at residue Gly134. In terms of domain architecture, KARI C-terminal knotted spans 183 to 328 (TFAEETETDL…AEMRKLLFGP (146 aa)). Mg(2+)-binding residues include Asp191, Glu195, Glu227, and Glu231. A substrate-binding site is contributed by Ser252.

The protein belongs to the ketol-acid reductoisomerase family. It depends on Mg(2+) as a cofactor.

The catalysed reaction is (2R)-2,3-dihydroxy-3-methylbutanoate + NADP(+) = (2S)-2-acetolactate + NADPH + H(+). It carries out the reaction (2R,3R)-2,3-dihydroxy-3-methylpentanoate + NADP(+) = (S)-2-ethyl-2-hydroxy-3-oxobutanoate + NADPH + H(+). It functions in the pathway amino-acid biosynthesis; L-isoleucine biosynthesis; L-isoleucine from 2-oxobutanoate: step 2/4. The protein operates within amino-acid biosynthesis; L-valine biosynthesis; L-valine from pyruvate: step 2/4. In terms of biological role, involved in the biosynthesis of branched-chain amino acids (BCAA). Catalyzes an alkyl-migration followed by a ketol-acid reduction of (S)-2-acetolactate (S2AL) to yield (R)-2,3-dihydroxy-isovalerate. In the isomerase reaction, S2AL is rearranged via a Mg-dependent methyl migration to produce 3-hydroxy-3-methyl-2-ketobutyrate (HMKB). In the reductase reaction, this 2-ketoacid undergoes a metal-dependent reduction by NADPH to yield (R)-2,3-dihydroxy-isovalerate. In Pyrobaculum calidifontis (strain DSM 21063 / JCM 11548 / VA1), this protein is Ketol-acid reductoisomerase (NADP(+)).